We begin with the raw amino-acid sequence, 205 residues long: Thymidylate kinase (205 aa).

Position 10 to 17 (Gly10 to Ser17) interacts with ATP.

It belongs to the thymidylate kinase family.

The catalysed reaction is dTMP + ATP = dTDP + ADP. In terms of biological role, phosphorylation of dTMP to form dTDP in both de novo and salvage pathways of dTTP synthesis. This Ralstonia nicotianae (strain ATCC BAA-1114 / GMI1000) (Ralstonia solanacearum) protein is Thymidylate kinase.